We begin with the raw amino-acid sequence, 148 residues long: Calcium-regulated heat stable protein 1 (148 aa).

A compositionally biased stretch (pro residues) spans 1 to 12; it reads MSSEPPPPPLQP. The tract at residues 1 to 47 is disordered; sequence MSSEPPPPPLQPPTHQTSVGLLDTPRTRDRSPSPLRGNVVPSPLPTR. S2 is subject to N-acetylserine. S31, S33, and S42 each carry phosphoserine. T46 carries the phosphothreonine modification. Phosphoserine occurs at positions 53 and 59. The CSD domain maps to 63–130; sequence VYKGVCKCFC…KLQAVEVVIT (68 aa). Phosphoserine is present on S147.

In terms of assembly, homodimer. Interacts with STYX. Can be phosphorylated by DYRK2 (in vitro). Dephosphorylated by calcineurin in a Ca(2+) dependent manner.

It is found in the cytoplasm. Its subcellular location is the P-body. The protein resides in the cytoplasmic granule. Its function is as follows. Binds mRNA and regulates the stability of target mRNA. This is Calcium-regulated heat stable protein 1 (Carhsp1) from Mus musculus (Mouse).